Consider the following 433-residue polypeptide: PBSX phage terminase large subunit (433 aa).

It to B.subtilis YqaT and phage SPP1 terminase large subunit. In terms of assembly, dimer of a small and a large subunit.

Functions as a terminase. The polypeptide is PBSX phage terminase large subunit (xtmB) (Bacillus subtilis (strain 168)).